The primary structure comprises 246 residues: Triosephosphate isomerase (246 aa).

9-11 (NWK) contributes to the substrate binding site. Histidine 95 functions as the Electrophile in the catalytic mechanism. Glutamate 165 functions as the Proton acceptor in the catalytic mechanism. Substrate contacts are provided by residues glycine 171, serine 210, and 231–232 (GG).

It belongs to the triosephosphate isomerase family. As to quaternary structure, homodimer.

It localises to the cytoplasm. The catalysed reaction is D-glyceraldehyde 3-phosphate = dihydroxyacetone phosphate. The protein operates within carbohydrate biosynthesis; gluconeogenesis. Its pathway is carbohydrate degradation; glycolysis; D-glyceraldehyde 3-phosphate from glycerone phosphate: step 1/1. In terms of biological role, involved in the gluconeogenesis. Catalyzes stereospecifically the conversion of dihydroxyacetone phosphate (DHAP) to D-glyceraldehyde-3-phosphate (G3P). This chain is Triosephosphate isomerase, found in Thermodesulfovibrio yellowstonii (strain ATCC 51303 / DSM 11347 / YP87).